Consider the following 320-residue polypeptide: Major pollen allergen Pha a 5.1 (320 aa).

A signal peptide spans 1-23; it reads MAVQKYTMALFLAVALVAGPAAP. Residues 21–45 form a disordered region; sequence AAPTPPTPRTPPLLPPPRARDKATL. Over residues 22–37 the composition is skewed to pro residues; that stretch reads APTPPTPRTPPLLPPP.

It belongs to the Poa p IX/Phl p VI allergen family.

This is Major pollen allergen Pha a 5.1 from Phalaris aquatica (Canary grass).